Consider the following 252-residue polypeptide: Small ribosomal subunit protein uS2 (252 aa).

It belongs to the universal ribosomal protein uS2 family.

The chain is Small ribosomal subunit protein uS2 from Alcanivorax borkumensis (strain ATCC 700651 / DSM 11573 / NCIMB 13689 / SK2).